The following is a 258-amino-acid chain: Cyclohexa-1,5-dienecarbonyl-CoA hydratase (258 aa).

The protein belongs to the enoyl-CoA hydratase/isomerase family.

The catalysed reaction is cyclohexa-1,5-diene-1-carbonyl-CoA + H2O = 6-hydroxycyclohex-1-ene-1-carbonyl-CoA. The protein operates within aromatic compound metabolism; benzoyl-CoA degradation. Catalyzes the hydration of cyclohexa-1,5-diene-1-carboxyl-CoA. In Thauera aromatica, this protein is Cyclohexa-1,5-dienecarbonyl-CoA hydratase (dch).